Consider the following 57-residue polypeptide: Andropin (57 aa).

Residues 1-23 (MKYFVVLVVLALILAITVDPSDA) form the signal peptide.

It belongs to the andropin family. In terms of tissue distribution, ejaculatory duct of adult males.

It is found in the secreted. In terms of biological role, male-specific peptide with moderate activity against Gram-positive bacteria. The polypeptide is Andropin (Anp) (Drosophila sechellia (Fruit fly)).